The primary structure comprises 388 residues: Succinate--CoA ligase [ADP-forming] subunit beta (388 aa).

Residues 9 to 244 form the ATP-grasp domain; that stretch reads KQLFAQYGLP…PAQNDAREAH (236 aa). Residues K46, 53–55, E99, T102, and E107 contribute to the ATP site; that span reads GRG. Mg(2+)-binding residues include N199 and D213. Residues N264 and 321–323 each bind substrate; that span reads GIV.

Belongs to the succinate/malate CoA ligase beta subunit family. As to quaternary structure, heterotetramer of two alpha and two beta subunits. Mg(2+) serves as cofactor.

The catalysed reaction is succinate + ATP + CoA = succinyl-CoA + ADP + phosphate. It carries out the reaction GTP + succinate + CoA = succinyl-CoA + GDP + phosphate. The protein operates within carbohydrate metabolism; tricarboxylic acid cycle; succinate from succinyl-CoA (ligase route): step 1/1. In terms of biological role, succinyl-CoA synthetase functions in the citric acid cycle (TCA), coupling the hydrolysis of succinyl-CoA to the synthesis of either ATP or GTP and thus represents the only step of substrate-level phosphorylation in the TCA. The beta subunit provides nucleotide specificity of the enzyme and binds the substrate succinate, while the binding sites for coenzyme A and phosphate are found in the alpha subunit. The sequence is that of Succinate--CoA ligase [ADP-forming] subunit beta from Edwardsiella ictaluri (strain 93-146).